Consider the following 445-residue polypeptide: Cyclic GMP-AMP phosphodiesterase SMPDL3A (445 aa).

A signal peptide spans 1–22; it reads MALLGNFLCCLLVAWLCGPGLG. D42 and H44 together coordinate Zn(2+). A disulfide bridge connects residues C59 and C78. Residue N66 is glycosylated (N-linked (GlcNAc...) asparagine). Residue D107 participates in Zn(2+) binding. ATP is bound at residue H111. N128 is a glycosylation site (N-linked (GlcNAc...) asparagine). A Zn(2+)-binding site is contributed by N148. ATP-binding residues include N148 and H149. N219 and N235 each carry an N-linked (GlcNAc...) asparagine glycan. H249 lines the Zn(2+) pocket. Residue Y257 coordinates ATP. Zn(2+) is bound by residues H290 and H292. N-linked (GlcNAc...) asparagine glycosylation is found at N353 and N364. Cystine bridges form between C417-C421 and C427-C440.

Belongs to the acid sphingomyelinase family. In terms of assembly, monomer. Homodimer; homodimerizes following 2',3'-cGAMP-binding. Zn(2+) is required as a cofactor. N-glycosylated. As to expression, detected in blood serum (at protein level).

Its subcellular location is the secreted. The catalysed reaction is 2',3'-cGAMP + H2O = 5'-pGpA(2'-5') + H(+). It carries out the reaction 5'-pGpA(2'-5') + H2O = 5'-GpA(2'-5') + phosphate. It catalyses the reaction a ribonucleoside 5'-triphosphate + H2O = a ribonucleoside 5'-diphosphate + phosphate + H(+). The enzyme catalyses ATP + H2O = ADP + phosphate + H(+). With respect to regulation, requires micromolar levels of Zn(2+) for activity. Inhibited by millimolar levels of Zn(2+). Functionally, cyclic-nucleotide phosphodiesterase that acts as a negative regulator of innate immunity by mediating degradation of 2',3'-cGAMP, thereby inhibiting the cGAS-STING signaling. Specifically linearizes 2',3'-cGAMP into 2'5'-bond pGpA and further hydrolyzes pGpA to produce GpA. Also has in vitro nucleotide phosphodiesterase activity with nucleoside triphosphates, such as ATP. Has in vitro activity with p-nitrophenyl-TMP. Has lower activity with nucleoside diphosphates, and no activity with nucleoside monophosphates. Has in vitro activity with CDP-choline, giving rise to CMP and phosphocholine. Has in vitro activity with CDP-ethanolamine. Does not have sphingomyelin phosphodiesterase activity. In Mus musculus (Mouse), this protein is Cyclic GMP-AMP phosphodiesterase SMPDL3A.